Here is a 383-residue protein sequence, read N- to C-terminus: Hippurate hydrolase (383 aa).

It belongs to the peptidase M20 family.

The enzyme catalyses N-benzoylglycine + H2O = benzoate + glycine. Its function is as follows. Cleaves hippuric acid into benzoic acid and glycine. The sequence is that of Hippurate hydrolase from Campylobacter jejuni subsp. jejuni serotype O:2 (strain ATCC 700819 / NCTC 11168).